A 277-amino-acid chain; its full sequence is Phosphatidylserine decarboxylase proenzyme (277 aa).

Catalysis depends on charge relay system; for autoendoproteolytic cleavage activity residues Asp88, His144, and Ser242. The active-site Schiff-base intermediate with substrate; via pyruvic acid; for decarboxylase activity is Ser242. Ser242 carries the post-translational modification Pyruvic acid (Ser); by autocatalysis.

It belongs to the phosphatidylserine decarboxylase family. PSD-B subfamily. Prokaryotic type I sub-subfamily. As to quaternary structure, heterodimer of a large membrane-associated beta subunit and a small pyruvoyl-containing alpha subunit. It depends on pyruvate as a cofactor. Is synthesized initially as an inactive proenzyme. Formation of the active enzyme involves a self-maturation process in which the active site pyruvoyl group is generated from an internal serine residue via an autocatalytic post-translational modification. Two non-identical subunits are generated from the proenzyme in this reaction, and the pyruvate is formed at the N-terminus of the alpha chain, which is derived from the carboxyl end of the proenzyme. The autoendoproteolytic cleavage occurs by a canonical serine protease mechanism, in which the side chain hydroxyl group of the serine supplies its oxygen atom to form the C-terminus of the beta chain, while the remainder of the serine residue undergoes an oxidative deamination to produce ammonia and the pyruvoyl prosthetic group on the alpha chain. During this reaction, the Ser that is part of the protease active site of the proenzyme becomes the pyruvoyl prosthetic group, which constitutes an essential element of the active site of the mature decarboxylase.

The protein resides in the cell membrane. The catalysed reaction is a 1,2-diacyl-sn-glycero-3-phospho-L-serine + H(+) = a 1,2-diacyl-sn-glycero-3-phosphoethanolamine + CO2. It functions in the pathway phospholipid metabolism; phosphatidylethanolamine biosynthesis; phosphatidylethanolamine from CDP-diacylglycerol: step 2/2. In terms of biological role, catalyzes the formation of phosphatidylethanolamine (PtdEtn) from phosphatidylserine (PtdSer). The sequence is that of Phosphatidylserine decarboxylase proenzyme from Psychrobacter cryohalolentis (strain ATCC BAA-1226 / DSM 17306 / VKM B-2378 / K5).